Here is a 185-residue protein sequence, read N- to C-terminus: Lipid A acyltransferase PagP (185 aa).

The signal sequence occupies residues 1 to 14 (MKLKPVLYLLMLLG). Residue C15 is the site of N-palmitoyl cysteine attachment. A lipid anchor (S-diacylglycerol cysteine) is attached at C15. Residues H57, D100, and S101 contribute to the active site.

It belongs to the lipid A palmitoyltransferase family. Homodimer.

Its subcellular location is the cell outer membrane. The catalysed reaction is a lipid A + a 1,2-diacyl-sn-glycero-3-phosphocholine = a hepta-acyl lipid A + a 2-acyl-sn-glycero-3-phosphocholine. The enzyme catalyses a lipid IVA + a 1,2-diacyl-sn-glycero-3-phosphocholine = a lipid IVB + a 2-acyl-sn-glycero-3-phosphocholine. It carries out the reaction a lipid IIA + a 1,2-diacyl-sn-glycero-3-phosphocholine = a lipid IIB + a 2-acyl-sn-glycero-3-phosphocholine. Functionally, transfers a fatty acid residue from the sn-1 position of a phospholipid to the N-linked hydroxyfatty acid chain on the proximal unit of lipid A or its precursors. The chain is Lipid A acyltransferase PagP from Erwinia pyrifoliae (strain DSM 12163 / CIP 106111 / Ep16/96).